The following is a 505-amino-acid chain: AMP phosphorylase (505 aa).

AMP contacts are provided by residues Gly-169, 195–200 (SRAITG), and Thr-204. Catalysis depends on Asp-257, which acts as the Proton donor. AMP is bound by residues Ser-265 and Lys-289.

This sequence belongs to the thymidine/pyrimidine-nucleoside phosphorylase family. Type 2 subfamily.

It catalyses the reaction AMP + phosphate = alpha-D-ribose 1,5-bisphosphate + adenine. The enzyme catalyses CMP + phosphate = cytosine + alpha-D-ribose 1,5-bisphosphate. It carries out the reaction UMP + phosphate = alpha-D-ribose 1,5-bisphosphate + uracil. Its function is as follows. Catalyzes the conversion of AMP and phosphate to adenine and ribose 1,5-bisphosphate (R15P). Exhibits phosphorylase activity toward CMP and UMP in addition to AMP. Functions in an archaeal AMP degradation pathway, together with R15P isomerase and RubisCO. The protein is AMP phosphorylase of Methanocorpusculum labreanum (strain ATCC 43576 / DSM 4855 / Z).